The sequence spans 407 residues: Peptidase T (407 aa).

Residue His77 coordinates Zn(2+). Asp79 is an active-site residue. Asp138 contacts Zn(2+). Glu172 serves as the catalytic Proton acceptor. Zn(2+) contacts are provided by Glu173, Asp195, and His377.

It belongs to the peptidase M20B family. It depends on Zn(2+) as a cofactor.

The protein resides in the cytoplasm. The enzyme catalyses Release of the N-terminal residue from a tripeptide.. In terms of biological role, cleaves the N-terminal amino acid of tripeptides. This is Peptidase T from Aeromonas hydrophila subsp. hydrophila (strain ATCC 7966 / DSM 30187 / BCRC 13018 / CCUG 14551 / JCM 1027 / KCTC 2358 / NCIMB 9240 / NCTC 8049).